Consider the following 750-residue polypeptide: Photosystem I P700 chlorophyll a apoprotein A1 (750 aa).

The next 8 membrane-spanning stretches (helical) occupy residues 70–93, 156–179, 195–219, 291–309, 346–369, 385–411, 433–455, and 531–549; these read IFSA…FHGA, LYCT…FHYH, LNHH…HVSL, IAHH…GHMY, WHAQ…HHMY, LSLF…IFMV, AIIS…LYIH, and FLVH…LILL. 2 residues coordinate [4Fe-4S] cluster: cysteine 573 and cysteine 582. 2 helical membrane passes run 589–610 and 664–686; these read HVFL…HFSW and LSAY…MFLF. Histidine 675 serves as a coordination point for chlorophyll a'. 2 residues coordinate chlorophyll a: methionine 683 and tyrosine 691. Tryptophan 692 lines the phylloquinone pocket. The helical transmembrane segment at 724–744 threads the bilayer; it reads AVGVTHYLLGGIATTWAFFLA.

It belongs to the PsaA/PsaB family. As to quaternary structure, the PsaA/B heterodimer binds the P700 chlorophyll special pair and subsequent electron acceptors. PSI consists of a core antenna complex that captures photons, and an electron transfer chain that converts photonic excitation into a charge separation. The eukaryotic PSI reaction center is composed of at least 11 subunits. P700 is a chlorophyll a/chlorophyll a' dimer, A0 is one or more chlorophyll a, A1 is one or both phylloquinones and FX is a shared 4Fe-4S iron-sulfur center. is required as a cofactor.

Its subcellular location is the plastid. It localises to the chloroplast thylakoid membrane. It carries out the reaction reduced [plastocyanin] + hnu + oxidized [2Fe-2S]-[ferredoxin] = oxidized [plastocyanin] + reduced [2Fe-2S]-[ferredoxin]. Its function is as follows. PsaA and PsaB bind P700, the primary electron donor of photosystem I (PSI), as well as the electron acceptors A0, A1 and FX. PSI is a plastocyanin-ferredoxin oxidoreductase, converting photonic excitation into a charge separation, which transfers an electron from the donor P700 chlorophyll pair to the spectroscopically characterized acceptors A0, A1, FX, FA and FB in turn. Oxidized P700 is reduced on the lumenal side of the thylakoid membrane by plastocyanin. This chain is Photosystem I P700 chlorophyll a apoprotein A1, found in Gossypium hirsutum (Upland cotton).